The following is a 332-amino-acid chain: Melanocortin receptor 4 (332 aa).

Over 1-43 the chain is Extracellular; that stretch reads MNSTHHHGMYTSLHLWNRSSYGLHGNASESLGKGHPDGGCYEQ. Residues Asn-2, Asn-17, and Asn-26 are each glycosylated (N-linked (GlcNAc...) asparagine). Disulfide bonds link Cys-40–Cys-279 and Cys-271–Cys-277. A helical transmembrane segment spans residues 44–69; sequence LFVSPEVFVTLGVISLLENILVIVAI. Topologically, residues 70–81 are cytoplasmic; that stretch reads AKNKNLHSPMYF. A helical transmembrane segment spans residues 82–106; that stretch reads FICSLAVADMLVSVSNGSETIVITL. Glu-100 contacts Ca(2+). Topologically, residues 107–123 are extracellular; it reads LNSTDTDAQSFTVNIDN. Asn-108 carries N-linked (GlcNAc...) asparagine glycosylation. Ca(2+)-binding residues include Asp-122 and Asp-126. A helical membrane pass occupies residues 124-145; the sequence is VIDSVICSSLLASICSLLSIAV. Residues 146–165 lie on the Cytoplasmic side of the membrane; it reads DRYFTIFYALQYHNIMTVRR. The helical transmembrane segment at 166–186 threads the bilayer; that stretch reads VGIIISCIWAACTVSGVLFII. Residues 187 to 191 lie on the Extracellular side of the membrane; it reads YSDSS. Residues 192–215 form a helical membrane-spanning segment; it reads AVIICLISMFFTMLVLMASLYVHM. The Cytoplasmic portion of the chain corresponds to 216–248; that stretch reads FLMARLHIKRIAVLPGTGTIRQGTNMKGAITLT. Residues 249 to 271 traverse the membrane as a helical segment; that stretch reads ILIGVFVVCWAPFFLHLLFYISC. The Extracellular portion of the chain corresponds to 272–280; the sequence is PQNPYCVCF. The chain crosses the membrane as a helical span at residues 281 to 304; the sequence is MSHFNLYLILIMCNAVIDPLIYAL. The Cytoplasmic portion of the chain corresponds to 305–332; it reads RSQELRKTFKEIICFYPLGGICELSSRY. Residue Cys-318 is the site of S-palmitoyl cysteine attachment.

The protein belongs to the G-protein coupled receptor 1 family. As to quaternary structure, homodimer; disulfide-linked, also forms higher order oligomers. Interacts with GNAS. Interacts with ATRNL1. Interacts with MGRN1; this interaction competes with GNAS-binding and thus inhibits agonist-induced cAMP production. Interacts with MRAP and MRAP2; these associated factors increase ligand-sensitivity and generation of cAMP.

Its subcellular location is the cell membrane. Functionally, hormone receptor that acts as a key component of the leptin-melanocortin pathway at the intersection of homeostatic maintenance of energetic state. Plays a role in regulating food intake: activation by a stimulating hormone such as anorexigenic alpha-melanocyte stimulating hormone (alpha-MSH) inhibits appetite, whereas binding to a natural antagonist like Agouti-related protein/AGRP promotes appetite. G-protein-coupled receptor that activates conventional Galphas signaling leading to induction of anorexogenic signaling in the hypothalamus to result in negative energy balance. Regulates the firing activity of neurons from the hypothalamus by alpha-MSH and AGRP independently of Galphas signaling by ligand-induced coupling of closure of inwardly rectifying potassium channel KCNJ13. In intestinal epithelial cells, plays a role in the inhibition of hepatic glucose production via nesfatin-1/NUCB2 leading to increased cyclic adenosine monophosphate (cAMP) levels and glucagon-like peptide 1 (GLP-1) secretion in the intestinal epithelium. In Mus musculus (Mouse), this protein is Melanocortin receptor 4 (Mc4r).